A 126-amino-acid chain; its full sequence is Protein ApaG (126 aa).

The region spanning 2 to 126 (SALDNSIRVE…FRLATPGLLH (125 aa)) is the ApaG domain.

The sequence is that of Protein ApaG from Shewanella oneidensis (strain ATCC 700550 / JCM 31522 / CIP 106686 / LMG 19005 / NCIMB 14063 / MR-1).